Here is a 68-residue protein sequence, read N- to C-terminus: ATP synthase protein 8 (68 aa).

Residues 8-24 (VWPTIIMSMLLALFLLM) traverse the membrane as a helical segment. The residue at position 54 (lysine 54) is an N6-acetyllysine; alternate. Lysine 54 carries the N6-succinyllysine; alternate modification. Residue lysine 57 is modified to N6-acetyllysine.

This sequence belongs to the ATPase protein 8 family. As to quaternary structure, F-type ATPases have 2 components, CF(1) - the catalytic core - and CF(0) - the membrane proton channel. Component of an ATP synthase complex composed of ATP5PB, ATP5MC1, ATP5F1E, ATP5PD, ATP5ME, ATP5PF, ATP5MF, MT-ATP6, MT-ATP8, ATP5F1A, ATP5F1B, ATP5F1D, ATP5F1C, ATP5PO, ATP5MG, ATP5MK and ATP5MJ. Interacts with PRICKLE3.

It localises to the mitochondrion membrane. In terms of biological role, mitochondrial membrane ATP synthase (F(1)F(0) ATP synthase or Complex V) produces ATP from ADP in the presence of a proton gradient across the membrane which is generated by electron transport complexes of the respiratory chain. F-type ATPases consist of two structural domains, F(1) - containing the extramembraneous catalytic core and F(0) - containing the membrane proton channel, linked together by a central stalk and a peripheral stalk. During catalysis, ATP synthesis in the catalytic domain of F(1) is coupled via a rotary mechanism of the central stalk subunits to proton translocation. Part of the complex F(0) domain. Minor subunit located with subunit a in the membrane. This Hylobates lar (Lar gibbon) protein is ATP synthase protein 8 (MT-ATP8).